Here is a 294-residue protein sequence, read N- to C-terminus: 2-dehydro-3-deoxy-phosphogluconate/2-dehydro-3-deoxy-6-phosphogalactonate aldolase (294 aa).

Substrate-binding positions include 43–44 (TT), 130–132 (YNY), and 155–157 (KDT). K155 functions as the Schiff-base intermediate with substrate in the catalytic mechanism.

It belongs to the DapA family. KDPG aldolase subfamily. As to quaternary structure, homotetramer; dimer of dimers.

It catalyses the reaction 2-dehydro-3-deoxy-6-phospho-D-gluconate = D-glyceraldehyde 3-phosphate + pyruvate. The enzyme catalyses 2-dehydro-3-deoxy-6-phospho-D-galactonate = D-glyceraldehyde 3-phosphate + pyruvate. It participates in carbohydrate acid metabolism; 2-dehydro-3-deoxy-D-gluconate degradation; D-glyceraldehyde 3-phosphate and pyruvate from 2-dehydro-3-deoxy-D-gluconate: step 2/2. Its function is as follows. Involved in the degradation of glucose and galactose via the Entner-Doudoroff pathway. Catalyzes the reversible cleavage of 2-keto-3-deoxy-6-phosphogluconate (KDPG) and 2-keto-3-deoxygluconate (KDG) forming pyruvate and glyceraldehyde 3-phosphate or glyceraldehyde, respectively. It is also able to catalyze the reversible cleavage of 2-keto-3-deoxy-6-phosphogalactonate (KDPGal) and 2-keto-3-deoxygalactonate (KDGal). It is equally active with both D- and L-glyceraldehyde. The sequence is that of 2-dehydro-3-deoxy-phosphogluconate/2-dehydro-3-deoxy-6-phosphogalactonate aldolase from Saccharolobus solfataricus (Sulfolobus solfataricus).